A 159-amino-acid polypeptide reads, in one-letter code: UPF0756 membrane protein PTH_1668 (159 aa).

Transmembrane regions (helical) follow at residues 15-37 (ILITLLFLGLFGRSNLVVSSSCI), 61-81 (LGLVLLMLHILSPVATEKLTI), 117-137 (PEIIFGLTVGTVLGILFLRGT), and 138-158 (PCGPVMAAAVTAVFLQIASLF).

The protein belongs to the UPF0756 family.

Its subcellular location is the cell membrane. This is UPF0756 membrane protein PTH_1668 from Pelotomaculum thermopropionicum (strain DSM 13744 / JCM 10971 / SI).